The following is a 114-amino-acid chain: uncharacterized protein (114 aa).

A helical membrane pass occupies residues 7–27; that stretch reads YIFSFWFFFLVEYVVTFRLFL. The interval 90 to 114 is disordered; the sequence is KNSPEKKKFKRGLPISSKYTDGKKR.

The protein resides in the membrane. This is an uncharacterized protein from Saccharomyces cerevisiae (strain ATCC 204508 / S288c) (Baker's yeast).